The following is a 274-amino-acid chain: Endonuclease 8-like L720 (274 aa).

An FPG-type; degenerate zinc finger spans residues 241–274; the sequence is RIYRKSLCPLGHKTIRKKIGLRNRMTTWCPVCQL.

The protein belongs to the FPG family.

The chain is Endonuclease 8-like L720 from Acanthamoeba polyphaga mimivirus (APMV).